The primary structure comprises 309 residues: tRNA uridine(34) hydroxylase (309 aa).

Positions 123–217 constitute a Rhodanese domain; it reads DDPEVIVVDT…YLEEVPEEQT (95 aa). Cys177 acts as the Cysteine persulfide intermediate in catalysis.

This sequence belongs to the TrhO family.

The enzyme catalyses uridine(34) in tRNA + AH2 + O2 = 5-hydroxyuridine(34) in tRNA + A + H2O. Catalyzes oxygen-dependent 5-hydroxyuridine (ho5U) modification at position 34 in tRNAs. The chain is tRNA uridine(34) hydroxylase from Saccharophagus degradans (strain 2-40 / ATCC 43961 / DSM 17024).